We begin with the raw amino-acid sequence, 58 residues long: uncharacterized protein (58 aa).

Residues 24-44 form a helical membrane-spanning segment; sequence LSVYLGLATTIVCIVLFFTML.

It localises to the membrane. This is an uncharacterized protein from Haemophilus influenzae (strain ATCC 51907 / DSM 11121 / KW20 / Rd).